Consider the following 275-residue polypeptide: Phosphate import ATP-binding protein PstB (275 aa).

In terms of domain architecture, ABC transporter spans 29 to 270; the sequence is LEIKDLDLYY…PNKKKTEDYI (242 aa). Position 61–68 (61–68) interacts with ATP; it reads GPSGCGKS.

This sequence belongs to the ABC transporter superfamily. Phosphate importer (TC 3.A.1.7) family. The complex is composed of two ATP-binding proteins (PstB), two transmembrane proteins (PstC and PstA) and a solute-binding protein (PstS).

It localises to the cell inner membrane. The catalysed reaction is phosphate(out) + ATP + H2O = ADP + 2 phosphate(in) + H(+). Part of the ABC transporter complex PstSACB involved in phosphate import. Responsible for energy coupling to the transport system. The protein is Phosphate import ATP-binding protein PstB of Pseudoalteromonas translucida (strain TAC 125).